A 163-amino-acid chain; its full sequence is Phosphopantetheine adenylyltransferase (163 aa).

A substrate-binding site is contributed by T10. Residues T10–F11 and H18 contribute to the ATP site. Residues K42, L74, and R88 each contribute to the substrate site. ATP contacts are provided by residues G89–R91, E99, and N124–T130.

The protein belongs to the bacterial CoaD family. Homohexamer. The cofactor is Mg(2+).

Its subcellular location is the cytoplasm. The enzyme catalyses (R)-4'-phosphopantetheine + ATP + H(+) = 3'-dephospho-CoA + diphosphate. The protein operates within cofactor biosynthesis; coenzyme A biosynthesis; CoA from (R)-pantothenate: step 4/5. In terms of biological role, reversibly transfers an adenylyl group from ATP to 4'-phosphopantetheine, yielding dephospho-CoA (dPCoA) and pyrophosphate. The protein is Phosphopantetheine adenylyltransferase of Shewanella sp. (strain W3-18-1).